We begin with the raw amino-acid sequence, 263 residues long: Hydroxyethylthiazole kinase (263 aa).

Met-45 contributes to the substrate binding site. Residues Arg-121 and Ser-167 each coordinate ATP. Gly-194 is a binding site for substrate.

The protein belongs to the Thz kinase family. It depends on Mg(2+) as a cofactor.

It catalyses the reaction 5-(2-hydroxyethyl)-4-methylthiazole + ATP = 4-methyl-5-(2-phosphooxyethyl)-thiazole + ADP + H(+). It participates in cofactor biosynthesis; thiamine diphosphate biosynthesis; 4-methyl-5-(2-phosphoethyl)-thiazole from 5-(2-hydroxyethyl)-4-methylthiazole: step 1/1. In terms of biological role, catalyzes the phosphorylation of the hydroxyl group of 4-methyl-5-beta-hydroxyethylthiazole (THZ). The protein is Hydroxyethylthiazole kinase of Vibrio campbellii (strain ATCC BAA-1116).